The sequence spans 748 residues: Cytosolic phospholipase A2 (748 aa).

Positions 1-178 are phospholipid binding; that stretch reads MSFIDPYQHI…MKSFLGEENS (178 aa). The 119-residue stretch at 6-124 folds into the C2 domain; the sequence is PYQHIVVEHQ…GEKKEVQLTF (119 aa). Residues aspartate 40, threonine 41, aspartate 43, asparagine 65, aspartate 93, alanine 94, and asparagine 95 each coordinate Ca(2+). A PLA2c domain is found at 138–740; the sequence is VCSSTDLRFS…SSVEARRFFN (603 aa). Serine 228 serves as the catalytic Nucleophile. The tract at residues 431 to 459 is disordered; sequence SNDSSDSEDESQHPKGTENSEANEEYQNS. Residues 449-459 show a composition bias toward polar residues; that stretch reads NSEANEEYQNS. Serine 505 bears the Phosphoserine; by MAPK mark. Residue aspartate 549 is the Proton acceptor of the active site.

Post-translationally, activated by phosphorylation on a serine residue.

It localises to the cytoplasm. It is found in the cytoplasmic vesicle. It catalyses the reaction a 1,2-diacyl-sn-glycero-3-phosphocholine + H2O = a 1-acyl-sn-glycero-3-phosphocholine + a fatty acid + H(+). The catalysed reaction is a 1-acyl-sn-glycero-3-phosphocholine + H2O = sn-glycerol 3-phosphocholine + a fatty acid + H(+). Stimulated by agonists such as ATP, EGF, thrombin and bradykinin as well as by cytosolic Ca(2+). Functionally, selectively hydrolyzes arachidonyl phospholipids in the sn-2 position releasing arachidonic acid. Together with its lysophospholipid activity, it is implicated in the initiation of the inflammatory response. The sequence is that of Cytosolic phospholipase A2 (PLA2G4A) from Gallus gallus (Chicken).